We begin with the raw amino-acid sequence, 803 residues long: Translation initiation factor IF-2 (803 aa).

Disordered regions lie at residues 95–125 (PVVE…EKAE) and 138–178 (EVKE…EREE). Polar residues predominate over residues 111 to 121 (VPLTSDTTNLN). Residues 138–155 (EVKEEAKKTPSEKKETPK) are compositionally biased toward basic and acidic residues. Residues 156 to 167 (KGPRKETRRSRK) are compositionally biased toward basic residues. Residues 168 to 178 (PDKEDKWEREE) are compositionally biased toward basic and acidic residues. A tr-type G domain is found at 302–471 (PRAPVVTIMG…LLQAEVLELK (170 aa)). The tract at residues 311-318 (GHVDHGKT) is G1. 311–318 (GHVDHGKT) is a GTP binding site. Residues 336 to 340 (GITQH) are G2. The interval 357–360 (DTPG) is G3. GTP contacts are provided by residues 357-361 (DTPGH) and 411-414 (NKID). A G4 region spans residues 411–414 (NKID). The tract at residues 447–449 (SAK) is G5.

The protein belongs to the TRAFAC class translation factor GTPase superfamily. Classic translation factor GTPase family. IF-2 subfamily.

Its subcellular location is the cytoplasm. Its function is as follows. One of the essential components for the initiation of protein synthesis. Protects formylmethionyl-tRNA from spontaneous hydrolysis and promotes its binding to the 30S ribosomal subunits. Also involved in the hydrolysis of GTP during the formation of the 70S ribosomal complex. This Coxiella burnetii (strain Dugway 5J108-111) protein is Translation initiation factor IF-2.